The primary structure comprises 156 residues: Ribosomal RNA large subunit methyltransferase H (156 aa).

S-adenosyl-L-methionine-binding positions include Leu73, Gly104, and 123 to 128; that span reads LSALTL.

Belongs to the RNA methyltransferase RlmH family. Homodimer.

The protein resides in the cytoplasm. The enzyme catalyses pseudouridine(1915) in 23S rRNA + S-adenosyl-L-methionine = N(3)-methylpseudouridine(1915) in 23S rRNA + S-adenosyl-L-homocysteine + H(+). Specifically methylates the pseudouridine at position 1915 (m3Psi1915) in 23S rRNA. This Vibrio vulnificus (strain CMCP6) protein is Ribosomal RNA large subunit methyltransferase H.